The primary structure comprises 94 residues: Small ribosomal subunit protein uS19 (94 aa).

Belongs to the universal ribosomal protein uS19 family.

Functionally, protein S19 forms a complex with S13 that binds strongly to the 16S ribosomal RNA. This chain is Small ribosomal subunit protein uS19, found in Clostridium botulinum (strain Hall / ATCC 3502 / NCTC 13319 / Type A).